Reading from the N-terminus, the 1749-residue chain is E3 ubiquitin-protein ligase UBR1 (1749 aa).

Ala-2 is modified (N-acetylalanine). At Thr-21 the chain carries Phosphothreonine. Residues 97 to 168 form a UBR-type zinc finger; it reads QLCGRVFKSG…TGPFCVNHEP (72 aa). Zn(2+) contacts are provided by Cys-99, Cys-112, Cys-115, Cys-124, Cys-127, His-133, and His-136. Phe-148 is an a peptide binding site. Cys-149 provides a ligand contact to Zn(2+). Asp-150 serves as a coordination point for a peptide. Cys-151 is a Zn(2+) binding site. Asp-153 is a binding site for a peptide. Zn(2+) is bound by residues Cys-163 and His-166. Positions 842–868 are disordered; sequence QHSKAEHMQKKRRKQENKDEALPPPPP. The UBC2-binding region (U2BR) stretch occupies residues 1019–1054; it reads RKRKAEAARLHRQKIMAQMSALQKNFIETHKLMYDN. The Zn(2+) site is built by Cys-1098, Cys-1101, Cys-1159, His-1161, His-1164, and Cys-1167. The RING-type; atypical zinc-finger motif lies at 1098–1201; that stretch reads CILCQEEQEV…SGEYLCPLCK (104 aa). Ser-1179 bears the Phosphoserine mark. Cys-1197, Cys-1200, Cys-1627, Cys-1630, and Cys-1653 together coordinate Zn(2+).

This sequence belongs to the E3 ubiquitin-protein ligase UBR1-like family. As to quaternary structure, interacts with RECQL4. As to expression, broadly expressed, with highest levels in skeletal muscle, kidney and pancreas. Present in acinar cells of the pancreas (at protein level).

The protein localises to the cytoplasm. The protein resides in the cytosol. The enzyme catalyses S-ubiquitinyl-[E2 ubiquitin-conjugating enzyme]-L-cysteine + [acceptor protein]-L-lysine = [E2 ubiquitin-conjugating enzyme]-L-cysteine + N(6)-ubiquitinyl-[acceptor protein]-L-lysine.. It participates in protein modification; protein ubiquitination. Inhibited by the small-molecule compound RF-C11, which bears two heterovalent ligands: RF-C11 inhibits activity toward both type-1 and type-2 N-degrons. Functionally, E3 ubiquitin-protein ligase which is a component of the N-end rule pathway. Recognizes and binds proteins bearing specific N-terminal residues that are destabilizing according to the N-end rule, leading to their ubiquitination and subsequent degradation. Recognizes both type-1 and type-2 N-degrons, containing positively charged amino acids (Arg, Lys and His) and bulky and hydrophobic amino acids, respectively. Does not ubiquitinate proteins that are acetylated at the N-terminus. In contrast, it strongly binds methylated N-degrons. Binds leucine and is a negative regulator of the leucine-mTOR signaling pathway, thereby controlling cell growth. The chain is E3 ubiquitin-protein ligase UBR1 from Homo sapiens (Human).